The following is a 196-amino-acid chain: Pyridoxal 5'-phosphate synthase subunit PdxT (196 aa).

Residue Gly-47 to Ser-49 coordinates L-glutamine. Cys-79 functions as the Nucleophile in the catalytic mechanism. L-glutamine-binding positions include Arg-106 and Ile-134–Arg-135. Residues His-170 and Glu-172 each act as charge relay system in the active site.

The protein belongs to the glutaminase PdxT/SNO family. In the presence of PdxS, forms a dodecamer of heterodimers. Only shows activity in the heterodimer.

It catalyses the reaction aldehydo-D-ribose 5-phosphate + D-glyceraldehyde 3-phosphate + L-glutamine = pyridoxal 5'-phosphate + L-glutamate + phosphate + 3 H2O + H(+). It carries out the reaction L-glutamine + H2O = L-glutamate + NH4(+). Its pathway is cofactor biosynthesis; pyridoxal 5'-phosphate biosynthesis. Catalyzes the hydrolysis of glutamine to glutamate and ammonia as part of the biosynthesis of pyridoxal 5'-phosphate. The resulting ammonia molecule is channeled to the active site of PdxS. The polypeptide is Pyridoxal 5'-phosphate synthase subunit PdxT (Bacillus thuringiensis subsp. konkukian (strain 97-27)).